A 637-amino-acid chain; its full sequence is Proton myo-inositol cotransporter (637 aa).

Residues 1-65 (MSRKASEDVE…AARRQFQRDE (65 aa)) lie on the Cytoplasmic side of the membrane. Residue serine 6 is modified to Phosphoserine. The interval 16–38 (LSSLMGERRRRQPEPGAPGGERS) is disordered. Serine 44 and serine 47 each carry phosphoserine. The helical transmembrane segment at 66-86 (TPAFVYAAAAFSALGGFLFGY) threads the bilayer. Residues 87-114 (DTGVVSGAMLLLRRQMRLGAMWQELLVS) lie on the Extracellular side of the membrane. The helical transmembrane segment at 115 to 135 (GAVGAAAVAALAGGALNGALG) threads the bilayer. Residues 136-137 (RR) are Cytoplasmic-facing. The chain crosses the membrane as a helical span at residues 138 to 158 (SAILLASALCTVGSAVLAAAA). At 159 to 167 (NKETLLAGR) the chain is on the extracellular side. A helical membrane pass occupies residues 168–188 (LVVGLGIGIASMTVPVYIAEV). The Cytoplasmic segment spans residues 189–201 (SPPNLRGRLVTIN). A helical membrane pass occupies residues 202 to 222 (TLFITGGQFFASVVDGAFSYL). Residues 223–228 (QKDGWR) are Extracellular-facing. The helical transmembrane segment at 229–249 (YMLGLAAIPAVIQFLGFLFLP) threads the bilayer. Over 250 to 313 (ESPRWLIQKG…RMLSYPPTRR (64 aa)) the chain is Cytoplasmic. The helical transmembrane segment at 314–334 (ALAVGCGLQMFQQLSGINTIM) threads the bilayer. Topologically, residues 335-352 (YYSATILQMSGVEDDRLA) are extracellular. The helical transmembrane segment at 353–373 (IWLASITAFTNFIFTLVGVWL) threads the bilayer. Residues 374–382 (VEKVGRRKL) are Cytoplasmic-facing. Residues 383 to 403 (TFGSLAGTTVALTILALGFLL) traverse the membrane as a helical segment. Topologically, residues 404–497 (SAQVSPRVTF…SFCPTPYSWT (94 aa)) are extracellular. N-linked (GlcNAc...) asparagine glycosylation is found at asparagine 422, asparagine 447, and asparagine 474. A helical transmembrane segment spans residues 498–518 (ALVGLVLYLVFFAPGMGPMPW). Topologically, residues 519 to 538 (TVNSEIYPLWARSTGNACSA) are cytoplasmic. Residues 539–559 (GINWIFNVLVSLTFLHTAEYL) traverse the membrane as a helical segment. Over 560–562 (TYY) the chain is Extracellular. A helical membrane pass occupies residues 563-583 (GAFFLYAGFAAVGLLFVYGCL). Topologically, residues 584–637 (PETKGKKLEEIESLFDHRLCTCGTADSDEGRYIEYIRVKGSNYHLSDNDASDVE) are cytoplasmic. Phosphoserine occurs at positions 629 and 634.

Belongs to the major facilitator superfamily. Sugar transporter (TC 2.A.1.1) family.

The protein resides in the cell membrane. The enzyme catalyses myo-inositol(out) + H(+)(out) = myo-inositol(in) + H(+)(in). Functionally, h(+)-myo-inositol cotransporter. Can also transport related stereoisomers. In Rattus norvegicus (Rat), this protein is Proton myo-inositol cotransporter.